Reading from the N-terminus, the 514-residue chain is Na(+)/H(+) antiporter NhaB (514 aa).

A run of 11 helical transmembrane segments spans residues 21-41 (LAIVVFLIINPIVFFFISPFI), 43-63 (GWLLVAEFIFTLAMALKCYPL), 88-108 (IMANFEVILLLIFMVAGIFFM), 143-163 (FLDALTVVAVIISVAMGFYGV), 203-223 (LMMHAGVGTALGGVMTVVGEP), 239-259 (FFLRMAPVTIPVFICGLLTCF), 304-324 (ALIAIWLIVGLAFHLAAVGLI), 349-369 (QESLPFTALLVVFFSVVAVII), 390-410 (LALFYLFNGLLSSISDNVFVA), 448-468 (ATPNGQAAFLFLLTSSISPLI), and 484-504 (IVLSIIGLLAIEFILPAATIW).

It belongs to the NhaB Na(+)/H(+) (TC 2.A.34) antiporter family.

The protein resides in the cell inner membrane. The catalysed reaction is 2 Na(+)(in) + 3 H(+)(out) = 2 Na(+)(out) + 3 H(+)(in). Its function is as follows. Na(+)/H(+) antiporter that extrudes sodium in exchange for external protons. The polypeptide is Na(+)/H(+) antiporter NhaB (Haemophilus influenzae (strain ATCC 51907 / DSM 11121 / KW20 / Rd)).